The chain runs to 247 residues: Probable membrane transporter protein y4hK (247 aa).

6 helical membrane-spanning segments follow: residues 5 to 25, 31 to 51, 74 to 94, 121 to 141, 202 to 222, and 227 to 247; these read AIGL…VGQA, IAAM…ALAL, VYPF…VHLP, SALV…ITGA, FLPW…LIGS, and ASWL…KLLW.

Belongs to the 4-toluene sulfonate uptake permease (TSUP) (TC 2.A.102) family.

The protein localises to the cell membrane. In Sinorhizobium fredii (strain NBRC 101917 / NGR234), this protein is Probable membrane transporter protein y4hK.